A 272-amino-acid polypeptide reads, in one-letter code: Putative phosphoenolpyruvate synthase regulatory protein (272 aa).

Residue 152–159 coordinates ADP; the sequence is GVSRCGKT.

It belongs to the pyruvate, phosphate/water dikinase regulatory protein family. PSRP subfamily.

The catalysed reaction is [pyruvate, water dikinase] + ADP = [pyruvate, water dikinase]-phosphate + AMP + H(+). It carries out the reaction [pyruvate, water dikinase]-phosphate + phosphate + H(+) = [pyruvate, water dikinase] + diphosphate. Functionally, bifunctional serine/threonine kinase and phosphorylase involved in the regulation of the phosphoenolpyruvate synthase (PEPS) by catalyzing its phosphorylation/dephosphorylation. The protein is Putative phosphoenolpyruvate synthase regulatory protein of Pseudomonas putida (strain ATCC 47054 / DSM 6125 / CFBP 8728 / NCIMB 11950 / KT2440).